We begin with the raw amino-acid sequence, 806 residues long: Ribonucleoside-diphosphate reductase large subunit (806 aa).

In terms of domain architecture, ATP-cone spans 1 to 91; the sequence is MYVLNRKGEE…TDNLHKNTSD (91 aa). Residues 5 to 6, 11 to 17, T52, and D56 each bind ATP; these read NR and EDISFDQ. S215 serves as a coordination point for GDP. C216 and C442 are joined by a disulfide. Residues 224–226, K241, R254, and 261–262 contribute to the dTTP site; these read DSI and RG. N425 contributes to the GDP binding site. Residue N425 is the Proton acceptor of the active site. Catalysis depends on C427, which acts as the Cysteine radical intermediate. Residues E429 and 604-607 contribute to the GDP site; that span reads TAST. E429 serves as the catalytic Proton acceptor.

Belongs to the ribonucleoside diphosphate reductase large chain family. Heterodimer of a large and a small subunit.

It catalyses the reaction a 2'-deoxyribonucleoside 5'-diphosphate + [thioredoxin]-disulfide + H2O = a ribonucleoside 5'-diphosphate + [thioredoxin]-dithiol. Its activity is regulated as follows. Under complex allosteric control mediated by deoxynucleoside triphosphates and ATP binding to separate specificity and activation sites on the large subunit. The type of nucleotide bound at the specificity site determines substrate preference. It seems probable that ATP makes the enzyme reduce CDP and UDP, dGTP favors ADP reduction and dTTP favors GDP reduction. Stimulated by ATP and inhibited by dATP binding to the activity site. In terms of biological role, provides the precursors necessary for DNA synthesis. Catalyzes the biosynthesis of deoxyribonucleotides from the corresponding ribonucleotides. In Plasmodium falciparum (isolate Dd2), this protein is Ribonucleoside-diphosphate reductase large subunit (RNR1).